The chain runs to 345 residues: uncharacterized protein (345 aa).

It is found in the cell membrane. Functionally, involved in potassium and divalent cation transport. Enhances the transport activity of the cation/potassium transporter CzcD. This is an uncharacterized protein from Bacillus subtilis (strain 168).